A 455-amino-acid chain; its full sequence is Probable ATP-dependent RNA helicase DDX47 (455 aa).

The tract at residues 1–21 (MAADEEPDSPSGALQTAAEEE) is disordered. Ala2 carries the post-translational modification N-acetylalanine. Ser9 is modified (phosphoserine). The Q motif signature appears at 24–52 (KTFKDLGVTDVLCEACDQLGWAKPTKIQI). The 172-residue stretch at 55 to 226 (IPLALQGRDI…RAALKNPVKC (172 aa)) folds into the Helicase ATP-binding domain. 68–75 (AETGSGKT) contacts ATP. Thr149 carries the post-translational modification Phosphothreonine. A DEAD box motif is present at residues 174-177 (DEAD). The 161-residue stretch at 237 to 397 (KLQQYYLFIP…VFPTQDEEVM (161 aa)) folds into the Helicase C-terminal domain. Residues 412–455 (MELREHGEKKKRKREDAGDDDDKEGAIGVRNKVAGGKMKKRKGR) are disordered.

The protein belongs to the DEAD box helicase family. DDX47/RRP3 subfamily. Interacts with AGO1 and AGO2. Interacts with GABARAP. Interacts with NOL8; the interaction is RNA-dependent.

It localises to the nucleus. The protein resides in the nucleolus. It carries out the reaction ATP + H2O = ADP + phosphate + H(+). Its function is as follows. Involved in apoptosis. May have a role in rRNA processing and mRNA splicing. Associates with pre-rRNA precursors. The polypeptide is Probable ATP-dependent RNA helicase DDX47 (Ddx47) (Mus musculus (Mouse)).